Reading from the N-terminus, the 371-residue chain is Chaperone protein DnaJ (371 aa).

The region spanning 5-69 is the J domain; it reads DYYEVLGLSK…QKRAQYDQFG (65 aa). The CR-type zinc finger occupies 133-215; the sequence is GKELNVEIPV…CHGSGKVRKR (83 aa). Cys146, Cys149, Cys163, Cys166, Cys189, Cys192, Cys203, and Cys206 together coordinate Zn(2+). CXXCXGXG motif repeat units lie at residues 146-153, 163-170, 189-196, and 203-210; these read CDTCKGSG, CKHCSGSG, CSHCSGTG, and CTTCHGSG.

It belongs to the DnaJ family. As to quaternary structure, homodimer. The cofactor is Zn(2+).

Its subcellular location is the cytoplasm. Its function is as follows. Participates actively in the response to hyperosmotic and heat shock by preventing the aggregation of stress-denatured proteins and by disaggregating proteins, also in an autonomous, DnaK-independent fashion. Unfolded proteins bind initially to DnaJ; upon interaction with the DnaJ-bound protein, DnaK hydrolyzes its bound ATP, resulting in the formation of a stable complex. GrpE releases ADP from DnaK; ATP binding to DnaK triggers the release of the substrate protein, thus completing the reaction cycle. Several rounds of ATP-dependent interactions between DnaJ, DnaK and GrpE are required for fully efficient folding. Also involved, together with DnaK and GrpE, in the DNA replication of plasmids through activation of initiation proteins. This is Chaperone protein DnaJ from Bacillus cereus (strain AH820).